A 391-amino-acid chain; its full sequence is Mannonate dehydratase (391 aa).

This sequence belongs to the mannonate dehydratase family. It depends on Fe(2+) as a cofactor. Requires Mn(2+) as cofactor.

It catalyses the reaction D-mannonate = 2-dehydro-3-deoxy-D-gluconate + H2O. It participates in carbohydrate metabolism; pentose and glucuronate interconversion. Functionally, catalyzes the dehydration of D-mannonate. This is Mannonate dehydratase from Marinomonas sp. (strain MWYL1).